The following is a 365-amino-acid chain: Fructose-1,6-bisphosphatase class 1 2 (365 aa).

Positions 100, 122, 124, and 125 each coordinate Mg(2+). Substrate contacts are provided by residues 125–128 and Asn-221; that span reads DGSS. Residue Glu-293 participates in Mg(2+) binding.

It belongs to the FBPase class 1 family. As to quaternary structure, homotetramer. The cofactor is Mg(2+).

It is found in the cytoplasm. The enzyme catalyses beta-D-fructose 1,6-bisphosphate + H2O = beta-D-fructose 6-phosphate + phosphate. The protein operates within carbohydrate biosynthesis; gluconeogenesis. This chain is Fructose-1,6-bisphosphatase class 1 2, found in Leptothrix cholodnii (strain ATCC 51168 / LMG 8142 / SP-6) (Leptothrix discophora (strain SP-6)).